Consider the following 104-residue polypeptide: Large ribosomal subunit protein bL21 (104 aa).

The protein belongs to the bacterial ribosomal protein bL21 family. As to quaternary structure, part of the 50S ribosomal subunit. Contacts protein L20.

Its function is as follows. This protein binds to 23S rRNA in the presence of protein L20. The polypeptide is Large ribosomal subunit protein bL21 (Granulibacter bethesdensis (strain ATCC BAA-1260 / CGDNIH1)).